Reading from the N-terminus, the 445-residue chain is 3-phosphoshikimate 1-carboxyvinyltransferase (445 aa).

Residues lysine 21, serine 22, and arginine 26 each contribute to the 3-phosphoshikimate site. Position 21 (lysine 21) interacts with phosphoenolpyruvate. Residues glycine 92 and arginine 120 each contribute to the phosphoenolpyruvate site. 4 residues coordinate 3-phosphoshikimate: serine 165, glutamine 166, aspartate 307, and lysine 334. Glutamine 166 lines the phosphoenolpyruvate pocket. The Proton acceptor role is filled by aspartate 307. Phosphoenolpyruvate is bound by residues arginine 338, arginine 379, and lysine 405.

It belongs to the EPSP synthase family. In terms of assembly, monomer.

It is found in the cytoplasm. It carries out the reaction 3-phosphoshikimate + phosphoenolpyruvate = 5-O-(1-carboxyvinyl)-3-phosphoshikimate + phosphate. Its pathway is metabolic intermediate biosynthesis; chorismate biosynthesis; chorismate from D-erythrose 4-phosphate and phosphoenolpyruvate: step 6/7. Its function is as follows. Catalyzes the transfer of the enolpyruvyl moiety of phosphoenolpyruvate (PEP) to the 5-hydroxyl of shikimate-3-phosphate (S3P) to produce enolpyruvyl shikimate-3-phosphate and inorganic phosphate. This chain is 3-phosphoshikimate 1-carboxyvinyltransferase, found in Chlamydia pneumoniae (Chlamydophila pneumoniae).